Consider the following 684-residue polypeptide: Glycine--tRNA ligase beta subunit (684 aa).

This sequence belongs to the class-II aminoacyl-tRNA synthetase family. As to quaternary structure, tetramer of two alpha and two beta subunits.

The protein resides in the cytoplasm. It carries out the reaction tRNA(Gly) + glycine + ATP = glycyl-tRNA(Gly) + AMP + diphosphate. The chain is Glycine--tRNA ligase beta subunit from Pseudomonas fluorescens (strain SBW25).